A 101-amino-acid polypeptide reads, in one-letter code: Ubiquitin-related modifier 1 homolog (101 aa).

G101 carries the post-translational modification 1-thioglycine. G101 is covalently cross-linked (Glycyl lysine isopeptide (Gly-Lys) (interchain with K-? in acceptor proteins)).

The protein belongs to the URM1 family. In terms of assembly, interacts with cer. C-terminal thiocarboxylation occurs in 2 steps, it is first acyl-adenylated (-COAMP) via the hesA/moeB/thiF part of the MOCS3 homolog, then thiocarboxylated (-COSH) via the rhodanese domain of the MOCS3 homolog.

It localises to the cytoplasm. It functions in the pathway tRNA modification; 5-methoxycarbonylmethyl-2-thiouridine-tRNA biosynthesis. Its function is as follows. Acts as a sulfur carrier required for 2-thiolation of mcm(5)S(2)U at tRNA wobble positions of cytosolic tRNA(Lys), tRNA(Glu) and tRNA(Gln). Serves as sulfur donor in tRNA 2-thiolation reaction by being thiocarboxylated (-COSH) at its C-terminus by MOCS3. The sulfur is then transferred to tRNA to form 2-thiolation of mcm(5)S(2)U. Also acts as a ubiquitin-like protein (UBL) that is covalently conjugated via an isopeptide bond to lysine residues of target proteins such as Prx2/Jafrac1, Ciao1, Eip71CD and GILT1. The thiocarboxylated form serves as substrate for conjugation and oxidative stress specifically induces the formation of UBL-protein conjugates. The polypeptide is Ubiquitin-related modifier 1 homolog (Drosophila sechellia (Fruit fly)).